The chain runs to 560 residues: Choline/ethanolamine transporter FLVCR1 (560 aa).

Positions 1 to 22 (MVKLNDEEGAAMAPGHQPTNGY) are disordered. Over 1–99 (MVKLNDEEGA…TPGTEGSPAP (99 aa)) the chain is Cytoplasmic. Ser-56 is modified (phosphoserine). The tract at residues 68 to 99 (QTPLAPEEETQTRLLPTGPGEETPGTEGSPAP) is disordered. Residues 83-95 (PTGPGEETPGTEG) are compositionally biased toward low complexity. Residues 100-124 (QTALSARRFVVLLIFSLYSLVNAFQ) form a helical membrane-spanning segment. Residues 125 to 142 (WIQYSVISNVFEGFYGVS) lie on the Extracellular side of the membrane. A helical membrane pass occupies residues 143-170 (SLHIDWLSMVYMLAYVPLIFPATWLLDT). Residues 171-172 (RG) lie on the Cytoplasmic side of the membrane. A helical transmembrane segment spans residues 173–192 (LRLTALLGSGLNCLGAWVKC). Residues 193-199 (ASVQQHL) are Extracellular-facing. A helical transmembrane segment spans residues 200-228 (FWVTMLGQCLCSVAQVFILGLPSRIASVW). Gln-214 serves as a coordination point for ethanolamine. Residues 229–233 (FGPKE) are Cytoplasmic-facing. The chain crosses the membrane as a helical span at residues 234–259 (VSTACATAVLGNQLGAAIGFLLPPVL). Topologically, residues 260 to 265 (VPNTQN) are extracellular. A glycan (N-linked (GlcNAc...) asparagine) is linked at Asn-265. A helical membrane pass occupies residues 266–295 (NTDLLACNISTMFYGTSSVATFLCFLTIIA). Over 296 to 331 (FKEKPQYPPSQAQAALQNSPPAKYSYKKSIRNLFRN) the chain is Cytoplasmic. A helical membrane pass occupies residues 332 to 362 (VPFVLLLITYGIITGAFYSVSTLLNQMILTY). Over 363 to 366 (YKGE) the chain is Extracellular. A helical transmembrane segment spans residues 367–395 (EVSAGKIGLTLVVAGMVGSILCGFWLDYT). Topologically, residues 396–397 (KI) are cytoplasmic. Residues 398–420 (YKQTTLIVYILSFLGMVIFTFTL) form a helical membrane-spanning segment. The Extracellular portion of the chain corresponds to 421–423 (DLG). The chain crosses the membrane as a helical span at residues 424–453 (YGIVVFVTGGVLGFFMTGYLPLGFEFAVEI). At 454–461 (TYPESEGT) the chain is on the cytoplasmic side. A helical membrane pass occupies residues 462–487 (SSGLLNAAAQIFGILFTLAQGKLTTD). Gln-471 provides a ligand contact to ethanolamine. A choline-binding site is contributed by Gln-471. The Extracellular portion of the chain corresponds to 488-489 (YS). A helical membrane pass occupies residues 490-512 (PKAGNIFLCVWLFLGIILTALIK). Residues 513–560 (SDLRRHNINIGIANGDIKAVPVEDTVEDSPTDKESKTIVMSKQSESAI) lie on the Cytoplasmic side of the membrane. The interval 537 to 560 (TVEDSPTDKESKTIVMSKQSESAI) is disordered. Ser-541 bears the Phosphoserine mark. Polar residues predominate over residues 550–560 (IVMSKQSESAI).

This sequence belongs to the major facilitator superfamily. Feline leukemia virus subgroup C receptor (TC 2.A.1.28.1) family.

Its subcellular location is the cell membrane. It carries out the reaction choline(out) = choline(in). The catalysed reaction is ethanolamine(in) = ethanolamine(out). The enzyme catalyses heme b(in) = heme b(out). Its function is as follows. Uniporter that mediates the transport of extracellular choline and ethanolamine into cells, thereby playing a key role in phospholipid biosynthesis. Choline and ethanolamine are the precursors of phosphatidylcholine and phosphatidylethanolamine, respectively, the two most abundant phospholipids. Transport is not coupled with proton transport and is exclusively driven by the choline (or ethanolamine) gradient across the plasma membrane. Also acts as a heme b transporter that mediates heme efflux from the cytoplasm to the extracellular compartment. (Microbial infection) Confers susceptibility to Feline leukemia virus subgroup C (FeLV-C) infection, which is associated with fatal erythroid aplasia, also known as aplastic anemia. The chain is Choline/ethanolamine transporter FLVCR1 (FLVCR1) from Felis catus (Cat).